The primary structure comprises 718 residues: Amino-acid acetyltransferase, mitochondrial (718 aa).

The N-terminal 36 residues, M1 to F36, are a transit peptide targeting the mitochondrion. Residues Q97–I116 form a disordered region. The 170-residue stretch at R539 to P708 folds into the N-acetyltransferase domain.

Belongs to the acetyltransferase family.

The protein resides in the mitochondrion. It carries out the reaction L-glutamate + acetyl-CoA = N-acetyl-L-glutamate + CoA + H(+). It functions in the pathway amino-acid biosynthesis; L-arginine biosynthesis; N(2)-acetyl-L-ornithine from L-glutamate: step 1/4. In terms of biological role, N-acetylglutamate synthase involved in arginine biosynthesis. This is Amino-acid acetyltransferase, mitochondrial (arg2) from Aspergillus clavatus (strain ATCC 1007 / CBS 513.65 / DSM 816 / NCTC 3887 / NRRL 1 / QM 1276 / 107).